The primary structure comprises 235 residues: Protein C1orf43 homolog (235 aa).

The chain crosses the membrane as a helical span at residues 11–31; the sequence is VNVVLVMAYGSLVFVLLFIFV.

Its subcellular location is the membrane. The protein localises to the golgi apparatus. The protein resides in the mitochondrion. In terms of biological role, general regulator of phagocytosis. Required to uptake Gram negative bacterium by macrophages. The protein is Protein C1orf43 homolog of Rattus norvegicus (Rat).